Here is a 195-residue protein sequence, read N- to C-terminus: MAPPVRYCIPGERLCNLEEGSPGSGTYTRHGYIFSSLAGCLMKSSENGALPVVSVVRETESQLLPDVGAIVTCKVSSINSRFAKVHILYVGSMPLKNSFRGTIRKEDVRATEKDKVEIYKSFRPGDIVLAKVISLGDAQSNYLLTTAENELGVVVAHSESGIQMVPISWCEMQCPKTHTKEFRKVARVQPEFLQT.

S21 and S98 each carry phosphoserine. Residues 66–147 (DVGAIVTCKV…AQSNYLLTTA (82 aa)) form the S1 motif domain.

This sequence belongs to the CSL4 family. In terms of assembly, component of the RNA exosome core complex (Exo-9), composed of EXOSC1, EXOSC2, EXOSC3, EXOSC4, EXOSC5, EXOSC6, EXOSC7, EXOSC8 and EXOSC9; within the complex interacts with EXOSC6. The catalytically inactive RNA exosome core complex (Exo-9) associates with the catalytic subunit EXOSC10/RRP6. Exo-9 may associate with DIS3 to form the nucleolar exosome complex, or DIS3L to form the cytoplasmic exosome complex. Exo-9 is formed by a hexameric base ring consisting of the heterodimers EXOSC4-EXOSC9, EXOSC5-EXOSC8 and EXOSC6-EXOSC7, and a cap ring consisting of EXOSC1, EXOSC2 and EXOSC3. The RNA exosome complex associates with cofactors C1D/RRP47, MPHOSPH6/MPP6 and MTREX/MTR4. Interacts with DDX60.

Its subcellular location is the nucleus. The protein resides in the nucleolus. The protein localises to the cytoplasm. Functionally, non-catalytic component of the RNA exosome complex which has 3'-&gt;5' exoribonuclease activity and participates in a multitude of cellular RNA processing and degradation events. In the nucleus, the RNA exosome complex is involved in proper maturation of stable RNA species such as rRNA, snRNA and snoRNA, in the elimination of RNA processing by-products and non-coding 'pervasive' transcripts, such as antisense RNA species and promoter-upstream transcripts (PROMPTs), and of mRNAs with processing defects, thereby limiting or excluding their export to the cytoplasm. The RNA exosome may be involved in Ig class switch recombination (CSR) and/or Ig variable region somatic hypermutation (SHM) by targeting AICDA deamination activity to transcribed dsDNA substrates. In the cytoplasm, the RNA exosome complex is involved in general mRNA turnover and specifically degrades inherently unstable mRNAs containing AU-rich elements (AREs) within their 3' untranslated regions, and in RNA surveillance pathways, preventing translation of aberrant mRNAs. It seems to be involved in degradation of histone mRNA. The catalytic inactive RNA exosome core complex of 9 subunits (Exo-9) is proposed to play a pivotal role in the binding and presentation of RNA for ribonucleolysis, and to serve as a scaffold for the association with catalytic subunits and accessory proteins or complexes. EXOSC1 as peripheral part of the Exo-9 complex stabilizes the hexameric ring of RNase PH-domain subunits through contacts with EXOSC6 and EXOSC8. This Homo sapiens (Human) protein is Exosome complex component CSL4 (EXOSC1).